A 185-amino-acid polypeptide reads, in one-letter code: Ribosome-recycling factor (185 aa).

It belongs to the RRF family.

The protein resides in the cytoplasm. Functionally, responsible for the release of ribosomes from messenger RNA at the termination of protein biosynthesis. May increase the efficiency of translation by recycling ribosomes from one round of translation to another. This is Ribosome-recycling factor from Mycobacterium leprae (strain Br4923).